Here is a 455-residue protein sequence, read N- to C-terminus: tRNA modification GTPase MnmE (455 aa).

(6S)-5-formyl-5,6,7,8-tetrahydrofolate contacts are provided by Lys-29, Glu-91, and Arg-131. The TrmE-type G domain occupies 226–378; the sequence is GLKVALVGLP…LIQELLKLAG (153 aa). A K(+)-binding site is contributed by Asn-236. GTP contacts are provided by residues 236-241, 255-261, 280-283, and 341-344; these read NVGKSS, TDLPGTT, DTAG, and NKAD. Ser-240 is a binding site for Mg(2+). Positions 255, 257, and 260 each coordinate K(+). Thr-261 lines the Mg(2+) pocket. (6S)-5-formyl-5,6,7,8-tetrahydrofolate is bound at residue Lys-455.

The protein belongs to the TRAFAC class TrmE-Era-EngA-EngB-Septin-like GTPase superfamily. TrmE GTPase family. In terms of assembly, homodimer. Heterotetramer of two MnmE and two MnmG subunits. The cofactor is K(+).

It localises to the cytoplasm. In terms of biological role, exhibits a very high intrinsic GTPase hydrolysis rate. Involved in the addition of a carboxymethylaminomethyl (cmnm) group at the wobble position (U34) of certain tRNAs, forming tRNA-cmnm(5)s(2)U34. This Prochlorococcus marinus (strain SARG / CCMP1375 / SS120) protein is tRNA modification GTPase MnmE.